The chain runs to 457 residues: Bifunctional protein GlmU (457 aa).

A pyrophosphorylase region spans residues 1 to 228 (MEELVSVILA…SEEIIGVNSR (228 aa)). UDP-N-acetyl-alpha-D-glucosamine contacts are provided by residues 9–12 (LAAG), K23, Q73, and 78–79 (GT). D102 is a Mg(2+) binding site. The UDP-N-acetyl-alpha-D-glucosamine site is built by G139, E154, N169, and N226. N226 contributes to the Mg(2+) binding site. The segment at 229–249 (VQLSNAEKVMRRRINEKHMEN) is linker. An N-acetyltransferase region spans residues 250 to 457 (GVTIIDPDST…VEERIKKGRL (208 aa)). The UDP-N-acetyl-alpha-D-glucosamine site is built by R331 and K349. H361 serves as the catalytic Proton acceptor. Positions 364 and 375 each coordinate UDP-N-acetyl-alpha-D-glucosamine. Acetyl-CoA is bound by residues 384-385 (NY), A421, and R438.

In the N-terminal section; belongs to the N-acetylglucosamine-1-phosphate uridyltransferase family. This sequence in the C-terminal section; belongs to the transferase hexapeptide repeat family. In terms of assembly, homotrimer. The cofactor is Mg(2+).

It is found in the cytoplasm. The enzyme catalyses alpha-D-glucosamine 1-phosphate + acetyl-CoA = N-acetyl-alpha-D-glucosamine 1-phosphate + CoA + H(+). It catalyses the reaction N-acetyl-alpha-D-glucosamine 1-phosphate + UTP + H(+) = UDP-N-acetyl-alpha-D-glucosamine + diphosphate. It participates in nucleotide-sugar biosynthesis; UDP-N-acetyl-alpha-D-glucosamine biosynthesis; N-acetyl-alpha-D-glucosamine 1-phosphate from alpha-D-glucosamine 6-phosphate (route II): step 2/2. It functions in the pathway nucleotide-sugar biosynthesis; UDP-N-acetyl-alpha-D-glucosamine biosynthesis; UDP-N-acetyl-alpha-D-glucosamine from N-acetyl-alpha-D-glucosamine 1-phosphate: step 1/1. The protein operates within bacterial outer membrane biogenesis; LPS lipid A biosynthesis. In terms of biological role, catalyzes the last two sequential reactions in the de novo biosynthetic pathway for UDP-N-acetylglucosamine (UDP-GlcNAc). The C-terminal domain catalyzes the transfer of acetyl group from acetyl coenzyme A to glucosamine-1-phosphate (GlcN-1-P) to produce N-acetylglucosamine-1-phosphate (GlcNAc-1-P), which is converted into UDP-GlcNAc by the transfer of uridine 5-monophosphate (from uridine 5-triphosphate), a reaction catalyzed by the N-terminal domain. The sequence is that of Bifunctional protein GlmU from Caldanaerobacter subterraneus subsp. tengcongensis (strain DSM 15242 / JCM 11007 / NBRC 100824 / MB4) (Thermoanaerobacter tengcongensis).